Consider the following 333-residue polypeptide: Transcription factor HHO6 (333 aa).

Positions 189 to 249 (ALRKQRRCWN…HLQKYRLHIR (61 aa)) constitute an HTH myb-type domain. A DNA-binding region (H-T-H motif) is located at residues 220–245 (PKQIREHMQEEGLTNDEVKSHLQKYR). The segment at 274–333 (DEEETCEGGESLKRSNAQSDSPQGPLQLPSTTTTTGGDSSMEDVEDAKSESFQLERLRSP) is disordered. Positions 287 to 303 (RSNAQSDSPQGPLQLPS) are enriched in polar residues. A compositionally biased stretch (basic and acidic residues) spans 319 to 333 (DAKSESFQLERLRSP).

The protein resides in the nucleus. In terms of biological role, probable transcription factor involved in phosphate signaling in roots. This chain is Transcription factor HHO6, found in Arabidopsis thaliana (Mouse-ear cress).